Consider the following 419-residue polypeptide: Cyclin-B2-2 (419 aa).

Residues 79-116 form a disordered region; it reads QPSSAPLAPIGSERQKRTADSAFHGPADMECTKITSDD.

Belongs to the cyclin family. Cyclin AB subfamily. As to quaternary structure, interacts with CDKB2-1. Expressed in the intercalary meristem and the elongation zone of internodes. Expressed in adventitious roots at all nodes under submergence conditions.

It is found in the nucleus. Its function is as follows. Involved in the control of the cell cycle at the G2/M (mitosis) transition. May associate to CDKB2-1 and activate CDKB2-1 kinase to promote cell division. The sequence is that of Cyclin-B2-2 (CYCB2-2) from Oryza sativa subsp. indica (Rice).